A 164-amino-acid polypeptide reads, in one-letter code: Endoribonuclease YbeY (164 aa).

Zn(2+) contacts are provided by histidine 120, histidine 124, and histidine 130.

The protein belongs to the endoribonuclease YbeY family. Zn(2+) serves as cofactor.

It is found in the cytoplasm. Functionally, single strand-specific metallo-endoribonuclease involved in late-stage 70S ribosome quality control and in maturation of the 3' terminus of the 16S rRNA. The chain is Endoribonuclease YbeY from Acidothermus cellulolyticus (strain ATCC 43068 / DSM 8971 / 11B).